Here is a 461-residue protein sequence, read N- to C-terminus: Bifunctional protein GlmU (461 aa).

The segment at 1 to 232 (MNLQIIILAA…SFEVQGINNR (232 aa)) is pyrophosphorylase. UDP-N-acetyl-alpha-D-glucosamine contacts are provided by residues 8-11 (LAAG), Lys-22, Gln-73, and 78-79 (GT). A Mg(2+)-binding site is contributed by Asp-102. UDP-N-acetyl-alpha-D-glucosamine contacts are provided by Gly-142, Glu-157, and Asn-230. Asn-230 lines the Mg(2+) pocket. Positions 233–253 (QQLQQLERIWQQRAANQLMEK) are linker. Residues 254–461 (GVTLADANRF…WKRPAKRERD (208 aa)) form an N-acetyltransferase region. UDP-N-acetyl-alpha-D-glucosamine is bound by residues Arg-336 and Lys-354. His-366 (proton acceptor) is an active-site residue. Residues Tyr-369 and Asn-380 each contribute to the UDP-N-acetyl-alpha-D-glucosamine site. Residues Ala-383, 389 to 390 (NY), Ser-408, and Ala-426 each bind acetyl-CoA.

In the N-terminal section; belongs to the N-acetylglucosamine-1-phosphate uridyltransferase family. This sequence in the C-terminal section; belongs to the transferase hexapeptide repeat family. As to quaternary structure, homotrimer. Mg(2+) is required as a cofactor.

It is found in the cytoplasm. It catalyses the reaction alpha-D-glucosamine 1-phosphate + acetyl-CoA = N-acetyl-alpha-D-glucosamine 1-phosphate + CoA + H(+). It carries out the reaction N-acetyl-alpha-D-glucosamine 1-phosphate + UTP + H(+) = UDP-N-acetyl-alpha-D-glucosamine + diphosphate. It participates in nucleotide-sugar biosynthesis; UDP-N-acetyl-alpha-D-glucosamine biosynthesis; N-acetyl-alpha-D-glucosamine 1-phosphate from alpha-D-glucosamine 6-phosphate (route II): step 2/2. It functions in the pathway nucleotide-sugar biosynthesis; UDP-N-acetyl-alpha-D-glucosamine biosynthesis; UDP-N-acetyl-alpha-D-glucosamine from N-acetyl-alpha-D-glucosamine 1-phosphate: step 1/1. Its pathway is bacterial outer membrane biogenesis; LPS lipid A biosynthesis. In terms of biological role, catalyzes the last two sequential reactions in the de novo biosynthetic pathway for UDP-N-acetylglucosamine (UDP-GlcNAc). The C-terminal domain catalyzes the transfer of acetyl group from acetyl coenzyme A to glucosamine-1-phosphate (GlcN-1-P) to produce N-acetylglucosamine-1-phosphate (GlcNAc-1-P), which is converted into UDP-GlcNAc by the transfer of uridine 5-monophosphate (from uridine 5-triphosphate), a reaction catalyzed by the N-terminal domain. This is Bifunctional protein GlmU from Legionella pneumophila (strain Lens).